A 528-amino-acid polypeptide reads, in one-letter code: MNYGVEKLKLKYSKHGCITCKIRKKRCSEDKPVCRDCRRLSFPCIYISESVDKQSLKKIKADIQHQLISKKRKHAPDSAQKAAVATRTRRVGSDEQDNQVYLSKPLEDCISQKLDSMGLQLYNYYRSHLANIISIAPMNQNYYLNIFLPMAHENDGILFAILAWSANHLSISSSNELRKDEIFVNLANKYTYMSLSHLKTNEGSSACAKLGFLYSLAQILILCGSEICQGDVKFWKILLNIGKNLIENHVGKDVSRILTTTTEEPSLEERIIFPNFNSVVKYWLIVNFIYHDILNFNTTSFPIEQYEKFFQRDQNSLPSSANFIESIDSPIEEIDPLIGINKPILLLLGQVTNLTRFLQTMEQEEMLEHGDKILSLQVEIYKLQPSLMALEHLDDEKKFYYLELFEIMKISTLMFFQLTLLKIDKDSLELQILRNKLDSKLDKVIGTFLEGSLCFPLFIYGVCIQVEDMEKKIDLEAKFDDILKRYKCYNFQNARLLIRKIWQNEADGISEHDLVHMIDELDYNINFA.

The segment at residues 17-44 is a DNA-binding region (zn(2)-C6 fungal-type); that stretch reads CITCKIRKKRCSEDKPVCRDCRRLSFPC. The Nuclear localization signal signature appears at 55 to 62; the sequence is SLKKIKAD.

In terms of assembly, UGA3 proteins associate in oligomers, at least in the presence of inducer.

The protein localises to the nucleus. GABA-dependent positive regulation of genes required for catabolism of GABA (UGA4, UGA1, and UGA2). The sequence is that of Transcriptional activator protein UGA3 (UGA3) from Saccharomyces cerevisiae (strain ATCC 204508 / S288c) (Baker's yeast).